The primary structure comprises 279 residues: MADS-box transcription factor PHERES 1 (279 aa).

The region spanning 1–60 (MRGKMKLSFIENDSVRKTTFTKRKKGMLKKFNELVTLCGVDACAVIRSPYNSIQEPWPSR) is the MADS-box domain.

As to quaternary structure, interacts with AGL61/DIANA and AGL62. Male gametophyte, embryo and endosperm.

The protein localises to the nucleus. Functionally, probable transcription factor involved in the development of gametophytes and seeds. In Arabidopsis thaliana (Mouse-ear cress), this protein is MADS-box transcription factor PHERES 1 (PHE1).